Here is a 311-residue protein sequence, read N- to C-terminus: Aspartate carbamoyltransferase catalytic subunit (311 aa).

Carbamoyl phosphate-binding residues include R55 and T56. K85 lines the L-aspartate pocket. 3 residues coordinate carbamoyl phosphate: R106, H135, and Q138. Positions 168 and 230 each coordinate L-aspartate. Residues L268 and P269 each contribute to the carbamoyl phosphate site.

The protein belongs to the aspartate/ornithine carbamoyltransferase superfamily. ATCase family. Heterododecamer (2C3:3R2) of six catalytic PyrB chains organized as two trimers (C3), and six regulatory PyrI chains organized as three dimers (R2).

It carries out the reaction carbamoyl phosphate + L-aspartate = N-carbamoyl-L-aspartate + phosphate + H(+). It functions in the pathway pyrimidine metabolism; UMP biosynthesis via de novo pathway; (S)-dihydroorotate from bicarbonate: step 2/3. Catalyzes the condensation of carbamoyl phosphate and aspartate to form carbamoyl aspartate and inorganic phosphate, the committed step in the de novo pyrimidine nucleotide biosynthesis pathway. The polypeptide is Aspartate carbamoyltransferase catalytic subunit (Salmonella paratyphi C (strain RKS4594)).